Here is a 50-residue protein sequence, read N- to C-terminus: Small ribosomal subunit protein uS14 (50 aa).

Positions 15, 18, 33, and 36 each coordinate Zn(2+).

The protein belongs to the universal ribosomal protein uS14 family. Zinc-binding uS14 subfamily. Part of the 30S ribosomal subunit. Zn(2+) serves as cofactor.

Binds 16S rRNA, required for the assembly of 30S particles. The sequence is that of Small ribosomal subunit protein uS14 from Methanosarcina barkeri (strain Fusaro / DSM 804).